The sequence spans 449 residues: uncharacterized protein (449 aa).

A compositionally biased stretch (basic residues) spans 1–13 (MPKAPKTKLHHAP). Residues 1–125 (MPKAPKTKLH…SQEEEEYEEL (125 aa)) are disordered. The residue at position 22 (S22) is a Phosphoserine. The segment covering 73–84 (KPSQISAFISNG) has biased composition (polar residues). Phosphoserine is present on S156.

This sequence belongs to the bystin family.

This is an uncharacterized protein from Schizosaccharomyces pombe (strain 972 / ATCC 24843) (Fission yeast).